A 208-amino-acid polypeptide reads, in one-letter code: Imidazole glycerol phosphate synthase subunit HisH (208 aa).

The Glutamine amidotransferase type-1 domain occupies 2 to 208; that stretch reads NVTIVDYNSG…LKIIENFLNL (207 aa). Residue C85 is the Nucleophile of the active site. Catalysis depends on residues H190 and E192.

In terms of assembly, heterodimer of HisH and HisF.

The protein localises to the cytoplasm. It catalyses the reaction 5-[(5-phospho-1-deoxy-D-ribulos-1-ylimino)methylamino]-1-(5-phospho-beta-D-ribosyl)imidazole-4-carboxamide + L-glutamine = D-erythro-1-(imidazol-4-yl)glycerol 3-phosphate + 5-amino-1-(5-phospho-beta-D-ribosyl)imidazole-4-carboxamide + L-glutamate + H(+). The enzyme catalyses L-glutamine + H2O = L-glutamate + NH4(+). Its pathway is amino-acid biosynthesis; L-histidine biosynthesis; L-histidine from 5-phospho-alpha-D-ribose 1-diphosphate: step 5/9. IGPS catalyzes the conversion of PRFAR and glutamine to IGP, AICAR and glutamate. The HisH subunit catalyzes the hydrolysis of glutamine to glutamate and ammonia as part of the synthesis of IGP and AICAR. The resulting ammonia molecule is channeled to the active site of HisF. This is Imidazole glycerol phosphate synthase subunit HisH from Pelagibacter ubique (strain HTCC1062).